Consider the following 193-residue polypeptide: uncharacterized protein (193 aa).

3 helical membrane-spanning segments follow: residues 5 to 25, 63 to 83, and 90 to 110; these read LILL…FIIF, IFIL…LINI, and ILTF…LTPA.

It is found in the cell membrane. This is an uncharacterized protein from Methanocaldococcus jannaschii (strain ATCC 43067 / DSM 2661 / JAL-1 / JCM 10045 / NBRC 100440) (Methanococcus jannaschii).